The sequence spans 467 residues: Dihydrolipoyl dehydrogenase 3 (467 aa).

Residues 34-43 (EGRETLGGTC), Lys52, and Ala116 each bind FAD. A disulfide bond links Cys43 and Cys48. NAD(+)-binding positions include 182–186 (GAGVI), Glu205, Val239, and 272–275 (AIGR). Residues Asp314 and Ala322 each coordinate FAD. Catalysis depends on His446, which acts as the Proton acceptor.

This sequence belongs to the class-I pyridine nucleotide-disulfide oxidoreductase family. In terms of assembly, homodimer. FAD is required as a cofactor.

The protein localises to the cytoplasm. The enzyme catalyses N(6)-[(R)-dihydrolipoyl]-L-lysyl-[protein] + NAD(+) = N(6)-[(R)-lipoyl]-L-lysyl-[protein] + NADH + H(+). LPD-3 may substitute for lipoamide dehydrogenase of the 2-oxoglutarate dehydrogenase and pyruvate multienzyme complexes when the latter is inactive or missing. This Pseudomonas aeruginosa (strain ATCC 15692 / DSM 22644 / CIP 104116 / JCM 14847 / LMG 12228 / 1C / PRS 101 / PAO1) protein is Dihydrolipoyl dehydrogenase 3 (lpd3).